The following is a 210-amino-acid chain: Claudin-4 (210 aa).

Topologically, residues M1–Q7 are cytoplasmic. An interaction with EPHA2 region spans residues M1 to K103. The helical transmembrane segment at V8 to P28 threads the bilayer. At M29–R81 the chain is on the extracellular side. C54 and C64 are oxidised to a cystine. A helical transmembrane segment spans residues A82–G102. Over K103–K116 the chain is Cytoplasmic. Residues I117–S137 traverse the membrane as a helical segment. Over W138–M160 the chain is Extracellular. Residues G161–L181 form a helical membrane-spanning segment. At C182–V210 the chain is on the cytoplasmic side. Y209 is modified (phosphotyrosine; by EPHA2). Residues Y209–V210 form an interactions with TJP1, TJP2 and TJP3 region.

The protein belongs to the claudin family. Can form heteropolymeric strands with other claudins. Interacts with CLDN8. Interacts with CLDN1. Directly interacts with TJP1/ZO-1, TJP2/ZO-2 and TJP3/ZO-3. Interacts with EPHA2; phosphorylates CLDN4 and may regulate tight junctions. Phosphorylated. Phosphorylation by EPHA2 is stimulated by EFNA1 and alters interaction with TJP1. In terms of tissue distribution, expressed primarily in lung and kidney. Present in both cortical and medullar collecting ducts (at protein level).

The protein resides in the cell junction. Its subcellular location is the tight junction. It localises to the cell membrane. It carries out the reaction chloride(in) = chloride(out). The enzyme catalyses bromide(in) = bromide(out). The catalysed reaction is iodide(out) = iodide(in). It catalyses the reaction fluoride(in) = fluoride(out). In terms of biological role, can associate with other claudins to regulate tight junction structural and functional strand dynamics. May coassemble with CLDN8 into tight junction strands containing anion-selective channels that convey paracellular chloride permeability in renal collecting ducts. May integrate into CLDN3 strands to modulate localized tight junction barrier properties. May disrupt strand assembly of channel-forming CLDN2 and CLDN15 and inhibit cation conductance. Cannot form tight junction strands on its own. The sequence is that of Claudin-4 from Mus musculus (Mouse).